The following is a 563-amino-acid chain: Germacrene C/D synthase (563 aa).

A disordered region spans residues 1-22 (MESCLSVSSAPPPKKNIQEPVR). The Mg(2+) site is built by Asp315, Asp319, and Glu468. The short motif at 315–319 (DDTYD) is the DDXXD motif element.

The protein belongs to the terpene synthase family. Mg(2+) is required as a cofactor. Predominantly expressed in root.

The catalysed reaction is (2E,6E)-farnesyl diphosphate = germacrene C + diphosphate. The enzyme catalyses (2E,6E)-farnesyl diphosphate = (-)-germacrene D + diphosphate. Its function is as follows. Mediates formation of germacrene C and germacrene D using farnesyl diphosphate as substrate. Can also catalyze formation of trace of germacrene B. This chain is Germacrene C/D synthase (TPS1), found in Valeriana officinalis (Valerian).